Consider the following 313-residue polypeptide: Olfactory receptor 8C8 (313 aa).

Residues 1–27 lie on the Extracellular side of the membrane; that stretch reads MMQITMENKSSVSEFILMGLTDQPELQ. N8 carries an N-linked (GlcNAc...) asparagine glycan. The helical transmembrane segment at 28–48 threads the bilayer; the sequence is LPLFVLFLMNYTATVMGNLTL. The Cytoplasmic segment spans residues 49–59; sequence MNLICLNSNLH. A helical transmembrane segment spans residues 60–80; it reads TPMYFFLFNLSFIDFCYSMVF. Residues 81–96 are Extracellular-facing; that stretch reads TPKMLMSFILEKNTIS. Residues 97–117 traverse the membrane as a helical segment; sequence FGGCMAQLFFFLFFVNSESYV. The cysteines at positions 100 and 192 are disulfide-linked. Residues 118–136 are Cytoplasmic-facing; the sequence is LTAMAYDRYVAICKPLTYK. Residues 137 to 157 form a helical membrane-spanning segment; that stretch reads VIMSPKICCLLIFSSYLMGFA. Residues 158–208 are Extracellular-facing; it reads SAMAHTGCMIRLSFCDSNIINHYMCDIFPLLPLSCSSTYVNELMSSVVVGS. A helical transmembrane segment spans residues 209–229; it reads AIILCCLIILISYAMILFNII. The Cytoplasmic segment spans residues 230–239; the sequence is HMSSGKGWSK. Residues 240–260 traverse the membrane as a helical segment; sequence ALGTCGSHIITVSLFYGSGLL. Topologically, residues 261-274 are extracellular; that stretch reads AYVKPSSAKTVGQG. The helical transmembrane segment at 275-295 threads the bilayer; the sequence is KFFSVFYTLLVPMLNPLIYSL. Residues 296–313 are Cytoplasmic-facing; the sequence is RNKDVKLAVKKTWKRITS.

Belongs to the G-protein coupled receptor 1 family. Expressed in neurons in the olfactory epithelium.

The protein resides in the cell membrane. In terms of biological role, potential odorant receptor. The polypeptide is Olfactory receptor 8C8 (Mus musculus (Mouse)).